We begin with the raw amino-acid sequence, 647 residues long: Centrosomal protein of 72 kDa (647 aa).

3 LRR repeats span residues 29–50 (ELQSLSIPGTYQEKITHLGHSL), 55–76 (GLKSLDLSRNSLVSLEGIQYLT), and 77–98 (ALESLNLYYNCISSLAEVFRLH). Residues 111 to 150 (NPVVKVEPDYRLFVVHLLPKLQQLDDRPVRASERKASRLH) enclose the LRRCT domain. Basic and acidic residues-rich tracts occupy residues 152 to 161 (ASEDSLDSKE) and 220 to 234 (KGREADSRGSQESRH). 3 disordered regions span residues 152–176 (ASEDSLDSKESVPASLKEGRPHHPR), 211–256 (PPGS…RETR), and 285–413 (PEAS…ALPG). Serine 237 is subject to Phosphoserine. Positions 366–377 (SLSRQDSSESRN) are enriched in basic and acidic residues. Serine 382 is modified (phosphoserine). Basic and acidic residues predominate over residues 390-402 (EEQRSRGVTDTRE). Phosphoserine is present on serine 404. A coiled-coil region spans residues 476–620 (SLALESKSLQ…AQHRAEVEQM (145 aa)).

This sequence belongs to the CEP72 family. In terms of assembly, interacts with KIZ, PCM1 and CDK5RAP2.

It localises to the cytoplasm. Its subcellular location is the cytoskeleton. The protein localises to the microtubule organizing center. The protein resides in the centrosome. It is found in the centriolar satellite. Involved in the recruitment of key centrosomal proteins to the centrosome. Provides centrosomal microtubule-nucleation activity on the gamma-tubulin ring complexes (gamma-TuRCs) and has critical roles in forming a focused bipolar spindle, which is needed for proper tension generation between sister chromatids. Required for localization of KIZ, AKAP9 and gamma-tubulin ring complexes (gamma-TuRCs). Involved in centriole duplication. Required for CDK5RAP22, CEP152, WDR62 and CEP63 centrosomal localization and promotes the centrosomal localization of CDK2. This is Centrosomal protein of 72 kDa (CEP72) from Homo sapiens (Human).